Reading from the N-terminus, the 353-residue chain is Chemerin-like receptor 2 (353 aa).

Topologically, residues 1-41 (MEVSKEMLFEELDNYSYALDYYSQESDPEEKVYLGLVHWIS) are extracellular. Asn14 carries an N-linked (GlcNAc...) asparagine glycan. A helical transmembrane segment spans residues 42-62 (LFLYALAFVLGIPGNAIVIWL). At 63 to 73 (MGFKWKKTVTT) the chain is on the cytoplasmic side. The chain crosses the membrane as a helical span at residues 74–94 (LWFLNLAIADFIFVLFLPLYI). The Extracellular portion of the chain corresponds to 95–112 (SYVALSFHWPFGLWLCKV). The cysteines at positions 110 and 187 are disulfide-linked. Residues 113-133 (NSFIAQLNMFSSVFFLTVISL) form a helical membrane-spanning segment. At 134-154 (DRYIHLLHPGLSHRHRTLKSS) the chain is on the cytoplasmic side. Residues 155–175 (LVVVILVWLLASLLGGPTLYF) traverse the membrane as a helical segment. Topologically, residues 176-210 (RDTMEVNNHIICYNNFQEHELTLMRHHVLTWVKFL) are extracellular. Residues 211-231 (FGYLFPLLTMSSCYLCLIFKM) traverse the membrane as a helical segment. Topologically, residues 232 to 247 (KKRNILISRKHLWMIL) are cytoplasmic. A helical transmembrane segment spans residues 248 to 268 (SVVIAFLVCWTPYHLFSIWEL). The Extracellular segment spans residues 269 to 286 (SIHHNSSFQNVLQGGIPL). A helical transmembrane segment spans residues 287 to 307 (STGLAFLNSCLNPILYVLISK). Residues 308-353 (TFQARFRASVAEVLKRSLWEASCSGTVSEQLRSAETKSLSLLETAQ) are Cytoplasmic-facing.

Belongs to the chemokine-like receptor (CMKLR) family. High expressed in white adipose tissue and skeletal muscle. Expressed in hippocampus and cortex.

It is found in the cell membrane. In terms of biological role, receptor for chemoattractant adipokine chemerin/RARRES2 suggesting a role for this receptor in the regulation of inflammation and energy homesotasis. Signals mainly via beta-arrestin pathway. Binding of RARRES2 activates weakly G proteins, calcium mobilization and MAPK1/MAPK3 (ERK1/2) phosphorylation too. Acts also as a receptor for TAFA1, mediates its effects on neuronal stem-cell proliferation and differentiation via the activation of ROCK/ERK and ROCK/STAT3 signaling pathway. This chain is Chemerin-like receptor 2 (Cmklr2), found in Mus musculus (Mouse).